The primary structure comprises 429 residues: Adenylosuccinate synthetase (429 aa).

GTP contacts are provided by residues 12-18 (GDEGKGK) and 40-42 (GHT). Asp13 functions as the Proton acceptor in the catalytic mechanism. The Mg(2+) site is built by Asp13 and Gly40. Residues 13 to 16 (DEGK), 38 to 41 (NAGH), Thr129, Arg143, Gln224, Thr239, and Arg303 contribute to the IMP site. Catalysis depends on His41, which acts as the Proton donor. A substrate-binding site is contributed by 299–305 (ATTGRKR). Residues Arg305, 331–333 (KLD), and 413–415 (SVG) contribute to the GTP site.

It belongs to the adenylosuccinate synthetase family. Homodimer. Mg(2+) serves as cofactor.

It is found in the cytoplasm. It catalyses the reaction IMP + L-aspartate + GTP = N(6)-(1,2-dicarboxyethyl)-AMP + GDP + phosphate + 2 H(+). It functions in the pathway purine metabolism; AMP biosynthesis via de novo pathway; AMP from IMP: step 1/2. Plays an important role in the de novo pathway of purine nucleotide biosynthesis. Catalyzes the first committed step in the biosynthesis of AMP from IMP. The sequence is that of Adenylosuccinate synthetase from Desulfosudis oleivorans (strain DSM 6200 / JCM 39069 / Hxd3) (Desulfococcus oleovorans).